The following is a 134-amino-acid chain: Transcription antitermination protein NusB (134 aa).

This sequence belongs to the NusB family.

Functionally, involved in transcription antitermination. Required for transcription of ribosomal RNA (rRNA) genes. Binds specifically to the boxA antiterminator sequence of the ribosomal RNA (rrn) operons. The chain is Transcription antitermination protein NusB from Shewanella baltica (strain OS223).